Reading from the N-terminus, the 350-residue chain is Heme A synthase (350 aa).

8 helical membrane passes run 14-34 (VAIW…IGGF), 95-115 (YVHR…FIYF), 125-145 (VVIK…AGWY), 162-182 (LALH…QFFD), 202-222 (VGII…VAGL), 260-280 (VQFI…ILTV), 296-316 (IIQI…AIAI), and 317-337 (AHQV…CYLR). Position 264 (His264) interacts with heme. A heme-binding site is contributed by His318.

Belongs to the COX15/CtaA family. Type 2 subfamily. Interacts with CtaB. Requires heme b as cofactor.

The protein resides in the cell membrane. The enzyme catalyses Fe(II)-heme o + 2 A + H2O = Fe(II)-heme a + 2 AH2. It participates in porphyrin-containing compound metabolism; heme A biosynthesis; heme A from heme O: step 1/1. Its function is as follows. Catalyzes the conversion of heme O to heme A by two successive hydroxylations of the methyl group at C8. The first hydroxylation forms heme I, the second hydroxylation results in an unstable dihydroxymethyl group, which spontaneously dehydrates, resulting in the formyl group of heme A. The chain is Heme A synthase from Wolbachia pipientis wMel.